Consider the following 405-residue polypeptide: Macrolide efflux protein A (405 aa).

11 helical membrane-spanning segments follow: residues 14 to 34 (IWAG…AIIF), 48 to 68 (MASL…GVLV), 76 to 98 (IMIG…AFYM), 145 to 165 (SLQS…YSVW), 168 to 188 (NAII…VAIV), 222 to 242 (FALL…NALF), 259 to 279 (ITEI…GLFG), 285 to 305 (ILLI…SGLL), 310 to 330 (FFIF…YSGV), 350 to 370 (LTGS…ALFA), and 373 to 393 (IGVN…AIVC).

Belongs to the major facilitator superfamily. Drug:H(+) antiporter-3 (DHA3) (TC 2.A.1.21) family.

Its subcellular location is the cell membrane. In terms of biological role, confers resistance to 14-membered macrolides including erythromycin and to 15-membered macrolides but not to 16-membered macrolides, lincosamides or analogs of streptogramin B. May function as an efflux pump to regulate intracellular macrolide levels. The chain is Macrolide efflux protein A from Streptococcus pyogenes serotype M6 (strain ATCC BAA-946 / MGAS10394).